The primary structure comprises 107 residues: Phosphoribosyl-ATP pyrophosphatase (107 aa).

Belongs to the PRA-PH family.

Its subcellular location is the cytoplasm. The enzyme catalyses 1-(5-phospho-beta-D-ribosyl)-ATP + H2O = 1-(5-phospho-beta-D-ribosyl)-5'-AMP + diphosphate + H(+). Its pathway is amino-acid biosynthesis; L-histidine biosynthesis; L-histidine from 5-phospho-alpha-D-ribose 1-diphosphate: step 2/9. This Bacillus cereus (strain AH187) protein is Phosphoribosyl-ATP pyrophosphatase.